A 388-amino-acid polypeptide reads, in one-letter code: Succinyl-diaminopimelate desuccinylase (388 aa).

Histidine 72 is a Zn(2+) binding site. Residue aspartate 74 is part of the active site. Zn(2+) is bound at residue aspartate 105. Glutamate 139 acts as the Proton acceptor in catalysis. Positions 140, 168, and 353 each coordinate Zn(2+).

Belongs to the peptidase M20A family. DapE subfamily. As to quaternary structure, homodimer. Zn(2+) serves as cofactor. It depends on Co(2+) as a cofactor.

It carries out the reaction N-succinyl-(2S,6S)-2,6-diaminopimelate + H2O = (2S,6S)-2,6-diaminopimelate + succinate. It functions in the pathway amino-acid biosynthesis; L-lysine biosynthesis via DAP pathway; LL-2,6-diaminopimelate from (S)-tetrahydrodipicolinate (succinylase route): step 3/3. In terms of biological role, catalyzes the hydrolysis of N-succinyl-L,L-diaminopimelic acid (SDAP), forming succinate and LL-2,6-diaminopimelate (DAP), an intermediate involved in the bacterial biosynthesis of lysine and meso-diaminopimelic acid, an essential component of bacterial cell walls. The polypeptide is Succinyl-diaminopimelate desuccinylase (Orientia tsutsugamushi (strain Boryong) (Rickettsia tsutsugamushi)).